Consider the following 313-residue polypeptide: PQCESETNFHYDIPPGYKDDVLVDVNNMSPSLVSDTQKHERGSHEVKIKHFSPYIAVCVTTFSLAFCCFMVHAAITRQPTHLLPFFFIQVFDLIICLIHILGFMSSTSDIRLVIHTKTGPIYIKSTGLTFIILSISCMMLAFKAYCLGMVWDCYKYLMLNRRGNLLDDWYSDQWGHLSTFWSLLRTGRNRGNNSIGNSGSPNEPNTRPRPDTITYDPANDLPKYEDILKIRNAYAPPPYYCSNTNGNVNTTTTDAVTTNTTITSATTANATTTITTNANTNTSTTTSVISPLTTTNKDDTQINNASSNAHSSC.

Over 1–54 the chain is Extracellular; sequence PQCESETNFHYDIPPGYKDDVLVDVNNMSPSLVSDTQKHERGSHEVKIKHFSPY. The helical transmembrane segment at 55-75 threads the bilayer; that stretch reads IAVCVTTFSLAFCCFMVHAAI. The Cytoplasmic portion of the chain corresponds to 76-82; sequence TRQPTHL. Residues 83-103 form a helical membrane-spanning segment; it reads LPFFFIQVFDLIICLIHILGF. At 104–129 the chain is on the extracellular side; the sequence is MSSTSDIRLVIHTKTGPIYIKSTGLT. Residues 130 to 150 form a helical membrane-spanning segment; that stretch reads FIILSISCMMLAFKAYCLGMV. At 151–313 the chain is on the cytoplasmic side; the sequence is WDCYKYLMLN…NASSNAHSSC (163 aa). Disordered regions lie at residues 192 to 218 and 279 to 313; these read NNSI…YDPA and NTNT…HSSC. Low complexity predominate over residues 279-295; the sequence is NTNTSTTTSVISPLTTT. Over residues 301–313 the composition is skewed to polar residues; sequence QINNASSNAHSSC.

Interacts (via N-terminal extracellular domain) with human C2a. In terms of processing, phosphorylated on tyrosine residues.

The protein localises to the cell membrane. Functionally, cell surface receptor that binds to human complement C2a protein. This results in inhibition of the classical and lectin pathways of complement activation, probably due to interference with binding of C2a to C4b and interference with cleavage by C1 or MASP2 such that C3 convertase cannot be formed. This infers resistance to complement-mediated cell lysis, allowing parasite survival and infection. The sequence is that of Tetraspanning orphan receptor from Schistosoma haematobium (Blood fluke).